Reading from the N-terminus, the 288-residue chain is Quinate/shikimate dehydrogenase (288 aa).

Substrate-binding residues include K71 and D107. Residues 132–135 (AGGA), 155–158 (NRRD), K205, 232–235 (CVYN), and G255 contribute to the NAD(+) site.

It belongs to the shikimate dehydrogenase family. Homodimer.

The enzyme catalyses L-quinate + NAD(+) = 3-dehydroquinate + NADH + H(+). It catalyses the reaction L-quinate + NADP(+) = 3-dehydroquinate + NADPH + H(+). The catalysed reaction is shikimate + NADP(+) = 3-dehydroshikimate + NADPH + H(+). It carries out the reaction shikimate + NAD(+) = 3-dehydroshikimate + NADH + H(+). Its pathway is metabolic intermediate biosynthesis; chorismate biosynthesis; chorismate from D-erythrose 4-phosphate and phosphoenolpyruvate: step 4/7. The actual biological function of YdiB remains unclear, nor is it known whether 3-dehydroshikimate or quinate represents the natural substrate. Catalyzes the reversible NAD-dependent reduction of both 3-dehydroshikimate (DHSA) and 3-dehydroquinate to yield shikimate (SA) and quinate, respectively. It can use both NAD or NADP for catalysis, however it has higher catalytic efficiency with NAD. This Escherichia coli O7:K1 (strain IAI39 / ExPEC) protein is Quinate/shikimate dehydrogenase.